The sequence spans 246 residues: MTSSVSRPSGRRADELRKVALTRHYTKHAEGSVLVEFGDTKVLCTASVAERVPEFLRERGQGWLTAEYGMLPRATHTRSDREAARGKQTGRTQEIQRLIGRALRAVFDLEALGPRTIHIDCDVIQADGGTRTASITGAFVAAHDAVSTLIAAGKLARSPITDHVAAISVGVYEGAPVLDLDYAEDSRCDTDMNVVMTGAGGFVEVQGTAEGVPFSRAEMNALLDLAQGGIAELVQLQKDVLGASHA.

Residues Arg-91 and 129 to 131 contribute to the phosphate site; that span reads GTR.

Belongs to the RNase PH family. Homohexameric ring arranged as a trimer of dimers.

The catalysed reaction is tRNA(n+1) + phosphate = tRNA(n) + a ribonucleoside 5'-diphosphate. In terms of biological role, phosphorolytic 3'-5' exoribonuclease that plays an important role in tRNA 3'-end maturation. Removes nucleotide residues following the 3'-CCA terminus of tRNAs; can also add nucleotides to the ends of RNA molecules by using nucleoside diphosphates as substrates, but this may not be physiologically important. Probably plays a role in initiation of 16S rRNA degradation (leading to ribosome degradation) during starvation. This is Ribonuclease PH from Burkholderia orbicola (strain MC0-3).